The primary structure comprises 95 residues: Aspartyl/glutamyl-tRNA(Asn/Gln) amidotransferase subunit C (95 aa).

The protein belongs to the GatC family. In terms of assembly, heterotrimer of A, B and C subunits.

The enzyme catalyses L-glutamyl-tRNA(Gln) + L-glutamine + ATP + H2O = L-glutaminyl-tRNA(Gln) + L-glutamate + ADP + phosphate + H(+). The catalysed reaction is L-aspartyl-tRNA(Asn) + L-glutamine + ATP + H2O = L-asparaginyl-tRNA(Asn) + L-glutamate + ADP + phosphate + 2 H(+). Functionally, allows the formation of correctly charged Asn-tRNA(Asn) or Gln-tRNA(Gln) through the transamidation of misacylated Asp-tRNA(Asn) or Glu-tRNA(Gln) in organisms which lack either or both of asparaginyl-tRNA or glutaminyl-tRNA synthetases. The reaction takes place in the presence of glutamine and ATP through an activated phospho-Asp-tRNA(Asn) or phospho-Glu-tRNA(Gln). The chain is Aspartyl/glutamyl-tRNA(Asn/Gln) amidotransferase subunit C from Prochlorococcus marinus (strain NATL1A).